The following is a 254-amino-acid chain: 5-oxoprolinase subunit A (254 aa).

Belongs to the LamB/PxpA family. Forms a complex composed of PxpA, PxpB and PxpC.

The enzyme catalyses 5-oxo-L-proline + ATP + 2 H2O = L-glutamate + ADP + phosphate + H(+). Its function is as follows. Catalyzes the cleavage of 5-oxoproline to form L-glutamate coupled to the hydrolysis of ATP to ADP and inorganic phosphate. The protein is 5-oxoprolinase subunit A of Burkholderia vietnamiensis (strain G4 / LMG 22486) (Burkholderia cepacia (strain R1808)).